The sequence spans 302 residues: RNA polymerase II holoenzyme cyclin-like subunit (302 aa).

A Cyclin N-terminal domain is found at Gln53–Ser142.

Belongs to the cyclin family. Cyclin C subfamily. Component of the srb8-11 complex, a regulatory module of the Mediator complex.

The protein resides in the nucleus. In terms of biological role, component of the srb8-11 complex. The srb8-11 complex is a regulatory module of the Mediator complex which is itself involved in regulation of basal and activated RNA polymerase II-dependent transcription. The srb8-11 complex may be involved in the transcriptional repression of a subset of genes regulated by Mediator. It may inhibit the association of the Mediator complex with RNA polymerase II to form the holoenzyme complex. The srb8-11 complex phosphorylates the C-terminal domain (CTD) of the largest subunit of RNA polymerase II. The protein is RNA polymerase II holoenzyme cyclin-like subunit (ssn8) of Aspergillus fumigatus (strain ATCC MYA-4609 / CBS 101355 / FGSC A1100 / Af293) (Neosartorya fumigata).